The sequence spans 245 residues: Orotidine 5'-phosphate decarboxylase (245 aa).

Substrate is bound by residues Asp22, Lys44, 71–80, Thr131, Arg192, Gln201, Gly221, and Arg222; that span reads DLKFHDIPNT. The Proton donor role is filled by Lys73.

It belongs to the OMP decarboxylase family. Type 1 subfamily. In terms of assembly, homodimer.

The enzyme catalyses orotidine 5'-phosphate + H(+) = UMP + CO2. Its pathway is pyrimidine metabolism; UMP biosynthesis via de novo pathway; UMP from orotate: step 2/2. Catalyzes the decarboxylation of orotidine 5'-monophosphate (OMP) to uridine 5'-monophosphate (UMP). The polypeptide is Orotidine 5'-phosphate decarboxylase (Escherichia coli (strain K12 / MC4100 / BW2952)).